A 270-amino-acid polypeptide reads, in one-letter code: Tetraspanin-14 (270 aa).

Residues 1-17 (MHYYRYSNAKVSCWYKY) are Cytoplasmic-facing. A helical membrane pass occupies residues 18 to 38 (LLFSYNIIFWLAGVVFLGVGL). Residues 39-61 (WAWSEKGVLSDLTKVTRMHGIDP) lie on the Extracellular side of the membrane. Residues 62–82 (VVLVLMVGVVMFTLGFAGCVG) form a helical membrane-spanning segment. Topologically, residues 83–92 (ALRENICLLN) are cytoplasmic. The helical transmembrane segment at 93-113 (FFCGTIVLIFFLELAVAVLAF) threads the bilayer. At 114–232 (LFQDWVRDRF…QALESWLPRN (119 aa)) the chain is on the extracellular side. A necessary and sufficient for interaction with ADAM10 region spans residues 114 to 232 (LFQDWVRDRF…QALESWLPRN (119 aa)). Disulfide bonds link Cys153–Cys221, Cys154–Cys186, Cys170–Cys180, and Cys187–Cys200. The N-linked (GlcNAc...) asparagine glycan is linked to Asn169. The helical transmembrane segment at 233-253 (IYIVAGVFIAISLLQIFGIFL) threads the bilayer. The Cytoplasmic portion of the chain corresponds to 254–270 (ARTLISDIEAVKAGHHF).

This sequence belongs to the tetraspanin (TM4SF) family. Interacts with ADAM10; the interaction promotes ADAM10 maturation and cell surface expression.

It is found in the cell membrane. Part of TspanC8 subgroup, composed of 6 members that interact with the transmembrane metalloprotease ADAM10. This interaction is required for ADAM10 exit from the endoplasmic reticulum and for enzymatic maturation and trafficking to the cell surface as well as substrate specificity. Different TspanC8/ADAM10 complexes have distinct substrates. Negatively regulates ADAM10-mediated cleavage of GP6. Promotes ADAM10-mediated cleavage of CDH5. The chain is Tetraspanin-14 from Homo sapiens (Human).